The following is a 693-amino-acid chain: Golgin subfamily A member 6D (693 aa).

Residues 14 to 611 (LEESRQNKLA…KLLELQELVL (598 aa)) adopt a coiled-coil conformation. Disordered regions lie at residues 20-70 (NKLA…GDSQ), 497-547 (LPGE…GTEQ), and 662-693 (VEPAPGVAREGSPHNNPTVQQIVQLSPVMQDT). The segment covering 537–547 (LPKEKADGTEQ) has biased composition (basic and acidic residues). The segment covering 674 to 693 (PHNNPTVQQIVQLSPVMQDT) has biased composition (polar residues).

It belongs to the GOLGA6 family.

The sequence is that of Golgin subfamily A member 6D (GOLGA6D) from Homo sapiens (Human).